The following is a 282-amino-acid chain: 4-diphosphocytidyl-2-C-methyl-D-erythritol kinase (282 aa).

K12 is a catalytic residue. 95 to 105 (PMGGGIGGGSS) is a binding site for ATP. D137 is an active-site residue.

Belongs to the GHMP kinase family. IspE subfamily.

The enzyme catalyses 4-CDP-2-C-methyl-D-erythritol + ATP = 4-CDP-2-C-methyl-D-erythritol 2-phosphate + ADP + H(+). It participates in isoprenoid biosynthesis; isopentenyl diphosphate biosynthesis via DXP pathway; isopentenyl diphosphate from 1-deoxy-D-xylulose 5-phosphate: step 3/6. Functionally, catalyzes the phosphorylation of the position 2 hydroxy group of 4-diphosphocytidyl-2C-methyl-D-erythritol. This Pseudomonas aeruginosa (strain LESB58) protein is 4-diphosphocytidyl-2-C-methyl-D-erythritol kinase.